The chain runs to 342 residues: Olfactory receptor 51F2 (342 aa).

The Extracellular portion of the chain corresponds to 1–39 (MTETSLSSQCFPMSVLNNTIAEPLIFLLMGIPGLKATQY). N17 carries an N-linked (GlcNAc...) asparagine glycan. Residues 40 to 60 (WISIPFCLLYVVAVSGNSMIL) form a helical membrane-spanning segment. The Cytoplasmic portion of the chain corresponds to 61–68 (FVVLCERS). Residues 69–89 (LHKPMYYFLSMLSATDLSLSL) traverse the membrane as a helical segment. The Extracellular segment spans residues 90–113 (CTLSTTLGVFWFEAREINLNACIA). Residues C111 and C203 are joined by a disulfide bond. Residues 114 to 134 (QMFFLHGFTFMESGVLLAMAF) form a helical membrane-spanning segment. Residues 135–153 (DRFVAICYPLRYTTILTNA) lie on the Cytoplasmic side of the membrane. The chain crosses the membrane as a helical span at residues 154 to 174 (RIAKIGMSMLIRNVAVMLPVM). Topologically, residues 175-210 (LFVKRLSFCSSMVLSHSYCYHVDLIQLSCTDNRINS) are extracellular. A helical transmembrane segment spans residues 211–231 (ILGLFALLSTTGFDCPCILLS). Residues 232–251 (YILIIRSVLSIASSEERRKA) are Cytoplasmic-facing. The chain crosses the membrane as a helical span at residues 252-272 (FNTCTSHISAVSIFYLPLISL). Residues 273–287 (SLVHRYGHSAPPFVH) lie on the Extracellular side of the membrane. Residues 288–308 (IIMANVFLLIPPVLNPIIYSV) traverse the membrane as a helical segment. Over 309-342 (KIKQIQKAIIKVLIQKHSKSNHQLFLIRDKAIYE) the chain is Cytoplasmic.

It belongs to the G-protein coupled receptor 1 family.

It localises to the cell membrane. In terms of biological role, odorant receptor. In Homo sapiens (Human), this protein is Olfactory receptor 51F2 (OR51F2).